A 339-amino-acid chain; its full sequence is Anthranilate phosphoribosyltransferase (339 aa).

5-phospho-alpha-D-ribose 1-diphosphate contacts are provided by residues Gly80, 83–84, Thr88, 90–93, 108–116, and Ser120; these read GD, NIST, and KHGNRAVSS. Residue Gly80 coordinates anthranilate. Position 92 (Ser92) interacts with Mg(2+). Asn111 contacts anthranilate. Arg166 provides a ligand contact to anthranilate. Positions 225 and 226 each coordinate Mg(2+).

The protein belongs to the anthranilate phosphoribosyltransferase family. In terms of assembly, homodimer. Mg(2+) is required as a cofactor.

The catalysed reaction is N-(5-phospho-beta-D-ribosyl)anthranilate + diphosphate = 5-phospho-alpha-D-ribose 1-diphosphate + anthranilate. Its pathway is amino-acid biosynthesis; L-tryptophan biosynthesis; L-tryptophan from chorismate: step 2/5. Functionally, catalyzes the transfer of the phosphoribosyl group of 5-phosphorylribose-1-pyrophosphate (PRPP) to anthranilate to yield N-(5'-phosphoribosyl)-anthranilate (PRA). This is Anthranilate phosphoribosyltransferase from Caldanaerobacter subterraneus subsp. tengcongensis (strain DSM 15242 / JCM 11007 / NBRC 100824 / MB4) (Thermoanaerobacter tengcongensis).